Here is a 366-residue protein sequence, read N- to C-terminus: C-X-C chemokine receptor type 3 (366 aa).

Residues 1–55 (MVPEMSERQEFQASEFAYLLENSSYDYGENETYFCCTSPPCPQDFSLNFDRTFLP) are Extracellular-facing. Asparagine 22 is a glycosylation site (N-linked (GlcNAc...) asparagine). Tyrosine 25 and tyrosine 27 each carry sulfotyrosine. Asparagine 30 carries N-linked (GlcNAc...) asparagine glycosylation. Residues 56–76 (VLYSLLFVLGLLGNGVVAVVL) traverse the membrane as a helical segment. Topologically, residues 77–88 (LSQRAALSSTDT) are cytoplasmic. The chain crosses the membrane as a helical span at residues 89–109 (FLLHLAVADALLVLTLPLWAV). Over 110–124 (DAAIQWVFGSGLCKV) the chain is Extracellular. An intrachain disulfide couples cysteine 122 to cysteine 201. A helical membrane pass occupies residues 125 to 145 (AGALFNINFYAGALLLACISF). The Cytoplasmic portion of the chain corresponds to 146 to 167 (DRYLSIVHATQFYRRGPPARVA). Residues 168 to 188 (LTCVAVWGLCLLFALPDFIFL) form a helical membrane-spanning segment. Topologically, residues 189–221 (SSHHDNRLNATHCQYNFPQEGRTALRVLQLVAG) are extracellular. Asparagine 197 carries N-linked (GlcNAc...) asparagine glycosylation. The chain crosses the membrane as a helical span at residues 222–242 (FLLPLLVMAYCYARILTVLLV). At 243 to 254 (SRGQRRLRAMRL) the chain is on the cytoplasmic side. The chain crosses the membrane as a helical span at residues 255 to 275 (VVVVVVAFALCWTPYHLVVLV). Residues 276–299 (DTLMDLGALARNCGRESRVDVAKS) lie on the Extracellular side of the membrane. Residues 300–320 (VTSGMGYMHCCLNPLLYAFVG) form a helical membrane-spanning segment. Residues 321–366 (VKFRERMWVLLMRLGCPDQRGHQRQPSASRRDSSWSETTEASYSGL) lie on the Cytoplasmic side of the membrane. The segment at 339-366 (QRGHQRQPSASRRDSSWSETTEASYSGL) is disordered. Polar residues predominate over residues 355 to 366 (WSETTEASYSGL).

This sequence belongs to the G-protein coupled receptor 1 family. Homomer. Forms heteromers with ACKR4. Interacts with PF4/CXCL4. Post-translationally, sulfation on Tyr-25 and Tyr-27 is essential for CXCL10 binding. In terms of processing, N-glycosylated.

The protein resides in the cell membrane. Its function is as follows. Receptor for the C-X-C chemokine CXCL9, CXCL10 and CXCL11 and mediates the proliferation, survival and angiogenic activity of mesangial cells through a heterotrimeric G-protein signaling pathway. Probably promotes cell chemotaxis response. Binds to CCL21. Upon activation by PF4, induces activated T-lymphocytes migration mediated via downstream Ras/extracellular signal-regulated kinase (ERK) signaling. This chain is C-X-C chemokine receptor type 3 (CXCR3), found in Capra hircus (Goat).